The sequence spans 61 residues: Defensin BmKDfsin1 (61 aa).

Positions 1–25 (MKTIVLLFVLVLVFALLVKMGMVEA) are cleaved as a signal peptide. 3 disulfide bridges follow: C29–C50, C36–C58, and C40–C60.

The protein belongs to the invertebrate defensin family. Type 2 subfamily. In terms of tissue distribution, highly expressed in non-venom gland (hemolymph) and moderately expressed in venom gland.

Its subcellular location is the secreted. Antibacterial peptide active against Gram-positive bacteria, but not on Gram-negative bacteria. Also has weak blocking activity on Kv1.1/KCNA1, Kv1.2/KCNA2, Kv1.3/KCNA3, KCa3.1/KCNN4/IK, KCa2.3/KCNN3/SK3 and Kv11.1/KCNH2/ERG1 channels (tested at 1 uM). It inhibits potassium channel current by interacting with the pore region. The sequence is that of Defensin BmKDfsin1 from Olivierus martensii (Manchurian scorpion).